A 165-amino-acid chain; its full sequence is UPF0303 protein ACP_1015 (165 aa).

This sequence belongs to the UPF0303 family.

In Acidobacterium capsulatum (strain ATCC 51196 / DSM 11244 / BCRC 80197 / JCM 7670 / NBRC 15755 / NCIMB 13165 / 161), this protein is UPF0303 protein ACP_1015.